The primary structure comprises 198 residues: FMN-dependent NADH:quinone oxidoreductase 6 (198 aa).

96-99 provides a ligand contact to FMN; that stretch reads MYNF.

The protein belongs to the azoreductase type 1 family. In terms of assembly, homodimer. FMN is required as a cofactor.

It carries out the reaction 2 a quinone + NADH + H(+) = 2 a 1,4-benzosemiquinone + NAD(+). The catalysed reaction is N,N-dimethyl-1,4-phenylenediamine + anthranilate + 2 NAD(+) = 2-(4-dimethylaminophenyl)diazenylbenzoate + 2 NADH + 2 H(+). Functionally, quinone reductase that provides resistance to thiol-specific stress caused by electrophilic quinones. Its function is as follows. Also exhibits azoreductase activity. Catalyzes the reductive cleavage of the azo bond in aromatic azo compounds to the corresponding amines. In Burkholderia lata (strain ATCC 17760 / DSM 23089 / LMG 22485 / NCIMB 9086 / R18194 / 383), this protein is FMN-dependent NADH:quinone oxidoreductase 6.